The sequence spans 398 residues: 8-amino-7-oxononanoate synthase (398 aa).

Arg-26 serves as a coordination point for substrate. 113–114 (GF) lines the pyridoxal 5'-phosphate pocket. His-138 serves as a coordination point for substrate. Ser-181, His-209, and Thr-238 together coordinate pyridoxal 5'-phosphate. Lys-241 carries the post-translational modification N6-(pyridoxal phosphate)lysine. Thr-355 contributes to the substrate binding site.

This sequence belongs to the class-II pyridoxal-phosphate-dependent aminotransferase family. BioF subfamily. As to quaternary structure, homodimer. Pyridoxal 5'-phosphate is required as a cofactor.

It catalyses the reaction 6-carboxyhexanoyl-[ACP] + L-alanine + H(+) = (8S)-8-amino-7-oxononanoate + holo-[ACP] + CO2. The protein operates within cofactor biosynthesis; biotin biosynthesis. In terms of biological role, catalyzes the decarboxylative condensation of pimeloyl-[acyl-carrier protein] and L-alanine to produce 8-amino-7-oxononanoate (AON), [acyl-carrier protein], and carbon dioxide. The sequence is that of 8-amino-7-oxononanoate synthase from Aeromonas hydrophila subsp. hydrophila (strain ATCC 7966 / DSM 30187 / BCRC 13018 / CCUG 14551 / JCM 1027 / KCTC 2358 / NCIMB 9240 / NCTC 8049).